A 277-amino-acid polypeptide reads, in one-letter code: 3-methyl-2-oxobutanoate hydroxymethyltransferase (277 aa).

Mg(2+)-binding residues include aspartate 53 and aspartate 96. Residues 53–54, aspartate 96, and lysine 126 contribute to the 3-methyl-2-oxobutanoate site; that span reads DS. Glutamate 128 is a Mg(2+) binding site. Residue glutamate 195 is the Proton acceptor of the active site.

It belongs to the PanB family. As to quaternary structure, homodecamer; pentamer of dimers. It depends on Mg(2+) as a cofactor.

The protein localises to the cytoplasm. The catalysed reaction is 3-methyl-2-oxobutanoate + (6R)-5,10-methylene-5,6,7,8-tetrahydrofolate + H2O = 2-dehydropantoate + (6S)-5,6,7,8-tetrahydrofolate. It participates in cofactor biosynthesis; (R)-pantothenate biosynthesis; (R)-pantoate from 3-methyl-2-oxobutanoate: step 1/2. Functionally, catalyzes the reversible reaction in which hydroxymethyl group from 5,10-methylenetetrahydrofolate is transferred onto alpha-ketoisovalerate to form ketopantoate. The protein is 3-methyl-2-oxobutanoate hydroxymethyltransferase of Chlorobium phaeobacteroides (strain DSM 266 / SMG 266 / 2430).